The following is a 122-amino-acid chain: Large ribosomal subunit protein uL14 (122 aa).

Belongs to the universal ribosomal protein uL14 family. In terms of assembly, part of the 50S ribosomal subunit. Forms a cluster with proteins L3 and L19. In the 70S ribosome, L14 and L19 interact and together make contacts with the 16S rRNA in bridges B5 and B8.

Binds to 23S rRNA. Forms part of two intersubunit bridges in the 70S ribosome. This is Large ribosomal subunit protein uL14 from Dehalococcoides mccartyi (strain ATCC BAA-2100 / JCM 16839 / KCTC 5957 / BAV1).